Reading from the N-terminus, the 474-residue chain is ATP synthase subunit beta (474 aa).

152 to 159 (GGAGVGKT) provides a ligand contact to ATP.

Belongs to the ATPase alpha/beta chains family. F-type ATPases have 2 components, CF(1) - the catalytic core - and CF(0) - the membrane proton channel. CF(1) has five subunits: alpha(3), beta(3), gamma(1), delta(1), epsilon(1). CF(0) has four main subunits: a(1), b(1), b'(1) and c(9-12).

Its subcellular location is the cell inner membrane. It carries out the reaction ATP + H2O + 4 H(+)(in) = ADP + phosphate + 5 H(+)(out). In terms of biological role, produces ATP from ADP in the presence of a proton gradient across the membrane. The catalytic sites are hosted primarily by the beta subunits. This Rhodospirillum rubrum (strain ATCC 11170 / ATH 1.1.1 / DSM 467 / LMG 4362 / NCIMB 8255 / S1) protein is ATP synthase subunit beta.